Consider the following 328-residue polypeptide: D-cysteine desulfhydrase (328 aa).

Lys51 is modified (N6-(pyridoxal phosphate)lysine).

The protein belongs to the ACC deaminase/D-cysteine desulfhydrase family. As to quaternary structure, homodimer. It depends on pyridoxal 5'-phosphate as a cofactor.

The enzyme catalyses D-cysteine + H2O = hydrogen sulfide + pyruvate + NH4(+) + H(+). Its function is as follows. Catalyzes the alpha,beta-elimination reaction of D-cysteine and of several D-cysteine derivatives. It could be a defense mechanism against D-cysteine. This Escherichia coli (strain UTI89 / UPEC) protein is D-cysteine desulfhydrase.